We begin with the raw amino-acid sequence, 425 residues long: UDP-N-acetylglucosamine 1-carboxyvinyltransferase (425 aa).

Position 22–23 (22–23 (KN)) interacts with phosphoenolpyruvate. Arg-93 provides a ligand contact to UDP-N-acetyl-alpha-D-glucosamine. The active-site Proton donor is the Cys-117. Cys-117 is subject to 2-(S-cysteinyl)pyruvic acid O-phosphothioketal. UDP-N-acetyl-alpha-D-glucosamine is bound by residues 122–126 (RPVDL), 162–165 (KVSV), Asp-307, and Ile-329.

Belongs to the EPSP synthase family. MurA subfamily.

It is found in the cytoplasm. It catalyses the reaction phosphoenolpyruvate + UDP-N-acetyl-alpha-D-glucosamine = UDP-N-acetyl-3-O-(1-carboxyvinyl)-alpha-D-glucosamine + phosphate. The protein operates within cell wall biogenesis; peptidoglycan biosynthesis. Its function is as follows. Cell wall formation. Adds enolpyruvyl to UDP-N-acetylglucosamine. The protein is UDP-N-acetylglucosamine 1-carboxyvinyltransferase of Pasteurella multocida (strain Pm70).